A 131-amino-acid chain; its full sequence is Small ribosomal subunit protein eS24 (131 aa).

The tract at residues R93 to K131 is disordered. Residues K101 to K121 show a composition bias toward basic residues.

Belongs to the eukaryotic ribosomal protein eS24 family. In terms of assembly, component of the small ribosomal subunit. Part of the small subunit (SSU) processome, composed of more than 70 proteins and the RNA chaperone small nucleolar RNA (snoRNA) U3.

The protein localises to the cytoplasm. The protein resides in the nucleus. It is found in the nucleolus. In terms of biological role, component of the small ribosomal subunit. The ribosome is a large ribonucleoprotein complex responsible for the synthesis of proteins in the cell. Required for processing of pre-rRNA and maturation of 40S ribosomal subunits. Part of the small subunit (SSU) processome, first precursor of the small eukaryotic ribosomal subunit. During the assembly of the SSU processome in the nucleolus, many ribosome biogenesis factors, an RNA chaperone and ribosomal proteins associate with the nascent pre-rRNA and work in concert to generate RNA folding, modifications, rearrangements and cleavage as well as targeted degradation of pre-ribosomal RNA by the RNA exosome. In Ictalurus punctatus (Channel catfish), this protein is Small ribosomal subunit protein eS24 (rps24).